Consider the following 278-residue polypeptide: Alcohol dehydrogenase-related 31 kDa protein (278 aa).

11-34 contributes to the NAD(+) binding site; sequence YVADCGGIALETSKVLMTKNIAKL. Ser-139 contacts substrate. Tyr-152 (proton acceptor) is an active-site residue.

This sequence belongs to the short-chain dehydrogenases/reductases (SDR) family.

The protein is Alcohol dehydrogenase-related 31 kDa protein (Adhr) of Drosophila persimilis (Fruit fly).